The following is a 210-amino-acid chain: Ribosomal RNA large subunit methyltransferase E (210 aa).

S-adenosyl-L-methionine-binding residues include G55, W57, D75, D93, and D117. K157 serves as the catalytic Proton acceptor. A disordered region spans residues 175–210; it reads YRQVKTTKPPSSRKKSSEMYVVGLDFKPKKNKKSKD.

The protein belongs to the class I-like SAM-binding methyltransferase superfamily. RNA methyltransferase RlmE family.

The protein localises to the cytoplasm. The catalysed reaction is uridine(2552) in 23S rRNA + S-adenosyl-L-methionine = 2'-O-methyluridine(2552) in 23S rRNA + S-adenosyl-L-homocysteine + H(+). In terms of biological role, specifically methylates the uridine in position 2552 of 23S rRNA at the 2'-O position of the ribose in the fully assembled 50S ribosomal subunit. This is Ribosomal RNA large subunit methyltransferase E from Methanobrevibacter smithii (strain ATCC 35061 / DSM 861 / OCM 144 / PS).